The chain runs to 398 residues: Phosphoglycerate kinase (398 aa).

Substrate contacts are provided by residues 20–22 (DFN), R35, 58–61 (HLGK), R118, and R155. ATP contacts are provided by residues K208, G296, E327, and 354–357 (GGDS).

The protein belongs to the phosphoglycerate kinase family. As to quaternary structure, monomer.

It localises to the cytoplasm. It catalyses the reaction (2R)-3-phosphoglycerate + ATP = (2R)-3-phospho-glyceroyl phosphate + ADP. Its pathway is carbohydrate degradation; glycolysis; pyruvate from D-glyceraldehyde 3-phosphate: step 2/5. The sequence is that of Phosphoglycerate kinase from Fusobacterium nucleatum subsp. nucleatum (strain ATCC 25586 / DSM 15643 / BCRC 10681 / CIP 101130 / JCM 8532 / KCTC 2640 / LMG 13131 / VPI 4355).